The primary structure comprises 132 residues: Fatty acid-binding protein, liver (132 aa).

An N-acetylvaline modification is found at V1. Y19 carries the phosphotyrosine; by Tyr-kinases modification.

It belongs to the calycin superfamily. Fatty-acid binding protein (FABP) family.

It localises to the cytoplasm. FABPs are thought to play a role in the intracellular transport of long-chain fatty acids and their acyl-CoA esters. The polypeptide is Fatty acid-binding protein, liver (Ginglymostoma cirratum (Nurse shark)).